The following is a 444-amino-acid chain: Citrate-proton symporter (444 aa).

At 1-41 (MPTARCSMRASSTAPVRMMATAGGARIGAILRVTSGNFLEQ) the chain is on the cytoplasmic side. Residues 42–62 (FDFFLFGFYATYIAHTFFPAS) form a helical membrane-spanning segment. Over 63–72 (SEFASLMMTF) the chain is Periplasmic. A helical membrane pass occupies residues 73-93 (AVFGAGFLMRPIGAIVLGAYI). The Cytoplasmic portion of the chain corresponds to 94-114 (DKVGRRKGLIVTLSIMATGTF). The chain crosses the membrane as a helical span at residues 115 to 135 (LIVLIPSYQTIGLWAPLLVLI). Residues 136–137 (GR) are Periplasmic-facing. The helical transmembrane segment at 138–158 (LLQGFSAGAELGGVSVYLAEI) threads the bilayer. The Cytoplasmic portion of the chain corresponds to 159 to 177 (ATPGRKGFYTSWQSGSQQV). A helical transmembrane segment spans residues 178–198 (AIMVAAAMGFALNAVLEPSAI). Ser-199 is a topological domain (periplasmic). Residues 200–220 (DWGWRIPFLFGVLIVPFIFIL) form a helical membrane-spanning segment. Over 221–251 (RRKLEETQEFTARRHHLAMRQVFATLLANWQ) the chain is Cytoplasmic. A helical membrane pass occupies residues 252–272 (VVIAGMMMVAMTTTAFYLITV). Residues 273–289 (YAPTFGKKVLMLSASDS) lie on the Periplasmic side of the membrane. The helical transmembrane segment at 290–310 (LLVTLLVAISNFFWLPVGGAL) threads the bilayer. The Cytoplasmic segment spans residues 311-318 (SDRFGRRS). The helical transmembrane segment at 319–339 (VLIAMTLLALATAWPALTMLA) threads the bilayer. Position 340 (Asn-340) is a topological domain, periplasmic. The chain crosses the membrane as a helical span at residues 341-361 (APSFLMMLSVLLWLSFIYGMY). Over 362–379 (NGAMIPALTEIMPAEVRV) the chain is Cytoplasmic. The helical transmembrane segment at 380–400 (AGFSLAYSLATAVFGGFTPVI) threads the bilayer. At 401-411 (STALIEYTGDK) the chain is on the periplasmic side. A helical membrane pass occupies residues 412-432 (ASPGYWMSFAAICGLLATCYL). Residues 433 to 444 (YRRSAVALQTAR) are Cytoplasmic-facing.

The protein belongs to the major facilitator superfamily. Metabolite:H+ Symporter (MHS) family (TC 2.A.1.6) family.

It localises to the cell inner membrane. Its function is as follows. Uptake of citrate across the boundary membrane with the concomitant transport of protons into the cell (symport system). In Klebsiella pneumoniae, this protein is Citrate-proton symporter (citH).